An 865-amino-acid polypeptide reads, in one-letter code: MITTKELRNKFINYFESKNHSHQPSSSLIPFGDDTLLFTNAGMVQFKDVFLGIEKKDFSRAVTVQKCLRAGGKHNDLDNVGYTARHHTFFEMLGNFSFGDYFKKEAISFAWEFLTKEIKLPVEKLWVTIYASDDEAFDVWHKHIGLAKERIIRIDSSDNFWSMGDTGPCGPCTEIFYDHGEDVAGGLPGTPEQDGDRYIEIWNIVFMQYNRHADGSTTDLPKPSVDTGMGLERISAVLQNVHSNYEIDLFQALIKKAQQVTHAKDINSPSLKVIADHIRACAFLIADGVLPANEGRGYVLRRIIRRAIRHGNKVGAKEIFFYKLVAELVSQMGEAYSQLIDKRELIEKTLIKEEKLFLKTIENGIKIFDAEIENLKDNTISGEVAFKLYDTYGFPFDLTADMAREKGLKVDEQAFLAQMQIQKQRSKEAGKFNVDYNSLINSQVKSEFRGYSTLIEDAKVLEIYQDDQLVASTSEQVSAVVVLDKTPFYAESGGQVGDKGILEGVGFEFVVEDVQKSGEAILHIGKLVKGRLNLNDELTARVSDKPRLATAANHSATHLLHKALKLVLGGHAEQKGSLVDEDRLRFDFTHDKAISRSEIEQIELLVNQQIRANYPVTTIEISQQKAKSLGAEALFGEKYGDIVRVISMGDFSIELCGGTHVAYTGDIGLFKVTSEGSIASGVRRIEAVTADKAIRHTFTNENKIIAIKDSLKANDINLIDKIKSMLEQIKNQEKQIAKLKKELLSGSSNDIKETNIGDIKVVVANVDGVDVKTLRNKIDDYKSKNTKVIAVLTTTNADKVQFVIGVSNALTTLIKAGDIAKELSSHIDGKGGGRADMAQGGGNNSANIDQALSQVEKFILNNIKE.

Zn(2+) contacts are provided by His554, His558, Cys656, and His660.

It belongs to the class-II aminoacyl-tRNA synthetase family. Zn(2+) serves as cofactor.

It localises to the cytoplasm. It carries out the reaction tRNA(Ala) + L-alanine + ATP = L-alanyl-tRNA(Ala) + AMP + diphosphate. Functionally, catalyzes the attachment of alanine to tRNA(Ala) in a two-step reaction: alanine is first activated by ATP to form Ala-AMP and then transferred to the acceptor end of tRNA(Ala). Also edits incorrectly charged Ser-tRNA(Ala) and Gly-tRNA(Ala) via its editing domain. The sequence is that of Alanine--tRNA ligase from Francisella tularensis subsp. mediasiatica (strain FSC147).